An 874-amino-acid chain; its full sequence is Speckle targeted PIP5K1A-regulated poly(A) polymerase (874 aa).

The Matrin-type zinc finger occupies 16-46 (FRCCLCHVTTANRPSLDAHLGGRKHRHLVEL). The RRM domain maps to 56 to 128 (RSVFVSGFPR…HRLRVRPREQ (73 aa)). A disordered region spans residues 113–146 (QHSLGGHRLRVRPREQKEFQSPASKSPKGAAPDS). Ser-205 provides a ligand contact to ATP. Positions 216 and 218 each coordinate Mg(2+). Positions 216 and 218 each coordinate UTP. The tract at residues 252–334 (QALACTPASP…ELAETPKEEK (83 aa)) is disordered. Pro residues predominate over residues 259-269 (ASPPDSQPPAS). Residues 280-291 (TPSSSLAPQTPD) are compositionally biased toward polar residues. Asn-392 serves as a coordination point for ATP. The UTP site is built by Asn-392, Arg-414, Tyr-432, and His-549. Positions 491–549 (LSSLLAQFFSCVSCWDLRGSLLSLREGQALPVAGGLPSNLWEGLRLGPLNLQDPFDLSH) constitute a PAP-associated domain. Residues 598-874 (SSPSSLLSAT…FLPQAIRHLK (277 aa)) are KA1; binds the bulging loops of U6 snRNA but is dispensable for terminal uridylyltransferase activity. Disordered regions lie at residues 638–662 (ATKRTRSEGGGTGESSQGGTSKRLK) and 705–761 (MQSP…ASLP). Ser-750 carries the post-translational modification Phosphoserine.

Belongs to the DNA polymerase type-B-like family. As to quaternary structure, associates with the cleavage and polyadenylation specificity factor (CPSF) complex. Interacts with CPSF1 and CPSF3; the interaction is direct. Interacts with PIP5K1A. It depends on Mg(2+) as a cofactor. Mn(2+) is required as a cofactor. In terms of processing, phosphorylated by CK1 in the proline-rich (Pro-rich) region. In terms of tissue distribution, widely expressed.

It is found in the nucleus. Its subcellular location is the nucleolus. The protein resides in the nucleus speckle. The catalysed reaction is RNA(n) + UTP = RNA(n)-3'-uridine ribonucleotide + diphosphate. It catalyses the reaction RNA(n) + ATP = RNA(n)-3'-adenine ribonucleotide + diphosphate. With respect to regulation, adenylyltransferase activity is specifically phosphatidylinositol 4,5-bisphosphate (PtdIns(4,5)P2). Functionally, poly(A) polymerase that creates the 3'-poly(A) tail of specific pre-mRNAs. Localizes to nuclear speckles together with PIP5K1A and mediates polyadenylation of a select set of mRNAs, such as HMOX1. In addition to polyadenylation, it is also required for the 3'-end cleavage of pre-mRNAs: binds to the 3'UTR of targeted pre-mRNAs and promotes the recruitment and assembly of the CPSF complex on the 3'UTR of pre-mRNAs. In addition to adenylyltransferase activity, also has uridylyltransferase activity. However, the ATP ratio is higher than UTP in cells, suggesting that it functions primarily as a poly(A) polymerase. Acts as a specific terminal uridylyltransferase for U6 snRNA in vitro: responsible for a controlled elongation reaction that results in the restoration of the four 3'-terminal UMP-residues found in newly transcribed U6 snRNA. Not involved in replication-dependent histone mRNA degradation. The polypeptide is Speckle targeted PIP5K1A-regulated poly(A) polymerase (TUT1) (Homo sapiens (Human)).